A 460-amino-acid chain; its full sequence is MVKEYKTITQIAGPLIFVEKTEPVGYNEIVNIKMTDGTVRRGQVLDSSSDIVVVQVFEGTGGLDKDCGVIFTGETLKLPASIDLLGRILSGSGDPRDGGPRIVPDQLLDINGAAMNPYARLPPKDFIQTGISTIDGTNTLVRGQKLPIFSASGLPHNEIALQIARQASVPGSESAFAVVFAAMGITNEEAQYFMSDFEKTGALERAVVFLNLADDPAVERIVTPRMALTAAEYLAYEHGMHVLVILTDITNYAEALRQMGAARNEVPGRRGYPGYMYTDLATLYERAGIVKGAKGSVTQIPILSMPGDDITHPIPDLSGYITEGQIVVARELHRKGIYPPINVLPSLSRLMNSGIGPGKTREDHKAVSDQMYAGYAEGRDLRGLVAIVGKEALSERDTKFLEFADLFEDKFVRQGRNENRTIEDTLEIGWQILTHLPENQLGRIDNKYIQKYHPAHRKAK.

The protein belongs to the ATPase alpha/beta chains family. Has multiple subunits with at least A(3), B(3), C, D, E, F, H, I and proteolipid K(x).

It is found in the cell membrane. Component of the A-type ATP synthase that produces ATP from ADP in the presence of a proton gradient across the membrane. The B chain is a regulatory subunit. This Methanosarcina acetivorans (strain ATCC 35395 / DSM 2834 / JCM 12185 / C2A) protein is A-type ATP synthase subunit B.